Here is a 760-residue protein sequence, read N- to C-terminus: RxLR effector protein PSR2 (760 aa).

The N-terminal stretch at 1–21 (MGCRYAVLALAVAYFAGSIAA) is a signal peptide. A RxLR-dEER motif is present at residues 47–62 (RFLRAANTADERNEDR). A WY1 repeat occupies 87-134 (PLLSWFEKKKSPDYVFLKLKINKGKQQLFDHPDWNVWVQYTTSVVKSD). Positions 87-760 (PLLSWFEKKK…TTKYMERYGQ (674 aa)) are 7 X 93 AA tandem repeats. Residues 135–221 (PEEAMIAALR…MKLYNSKPVN (87 aa)) form an LWY2 repeat. One copy of the LWY3 repeat lies at 222 to 312 (KKQQVTLVSM…KYVDNYNRDF (91 aa)). The stretch at 313–403 (PDEATTVMAT…KYVEDLNLKP (91 aa)) is one LWY4 repeat. An LWY5 repeat occupies 404-496 (EHNDLQVSII…KFLEHYYKSF (93 aa)). The stretch at 497 to 584 (PTPMMSALAK…RYLDEFNKKF (88 aa)) is one LWY6 repeat. An LWY7 repeat occupies 585–760 (PDEKVSMTDT…TTKYMERYGQ (176 aa)).

This sequence belongs to the RxLR effector family. In terms of assembly, interacts with host dsRNA-binding protein DRB4.

It is found in the secreted. Its subcellular location is the host cell. Secreted effector that possesses RNA silencing suppression activity by inhibiting the biogenesis of small RNAs in the host plant to promote enhanced susceptibility of host to the pathogen during infection. Interferes with secondary siRNA production by associating with host dsRNA-binding protein DRB4. Inhibits the host salicylic acid pathway during infection. The protein is RxLR effector protein PSR2 of Phytophthora infestans (strain T30-4) (Potato late blight agent).